The following is a 250-amino-acid chain: Doublesex- and mab-3-related transcription factor dmd-3 (250 aa).

A DNA-binding region (DM 1) is located at residues 19–68; sequence CQRCLNHGLREKRKNHKLSCTFRFCQCSNCIMVERRRQLNSRLMQIDGSR. Over residues 90–100 the composition is skewed to polar residues; sequence CTSQSETTNES. The tract at residues 90–115 is disordered; that stretch reads CTSQSETTNESSGEDKDDGKPKERRP. Positions 102–115 are enriched in basic and acidic residues; it reads GEDKDDGKPKERRP. Positions 117-164 form a DNA-binding region, DM 2; it reads CQRCAQHSVVNRLKGHKRACPFRDCFCAKCQVVVERQKLMADQIKLRR. Residues 166-201 form a disordered region; sequence QKREKNNLNSEREAPIAHSMTPSPIDTVTTTTTPTS. Basic and acidic residues predominate over residues 169–180; it reads EKNNLNSEREAP. The segment covering 186–201 has biased composition (low complexity); sequence TPSPIDTVTTTTTPTS.

The protein belongs to the DMRT family. In males, expressed in the tail tip. Specifically, expressed in 15 male-specific muscles of the tail tip called the diagonal muscles, and also in core body muscles of both males and hermaphrodites. In males, expressed in ray A-neurons. In males, expressed in PHC sensory neurons. In males, it is also expressed in the hindgut, B lineage and somatic gonad. In hermaphrodites, expressed in the anchor cell only.

The protein localises to the nucleus. It localises to the perikaryon. In terms of biological role, transcriptional activator which promotes male-specific development. Acts partially redundantly with the transcription factor mab-3 to coordinate tail tip cell fusion and retraction and thereby regulate male tail tip morphogenesis. This is most likely through the regulation of downstream effectors such as eff-1. May also negatively regulate the expression of other proteins implicated in male tail morphogenesis including nhr-25, vav-1 and arl-1 in tail tip cells. In males, plays a role in the development of ray A-neurons by negatively regulating the activity of the transcription factor ast-1. Plays a role in the male-specific differentiation of PHC sensory neurons into densely connected hub sensory neurons. Plays a role in male mating behavior. The chain is Doublesex- and mab-3-related transcription factor dmd-3 from Caenorhabditis elegans.